The following is an 81-amino-acid chain: Photosystem I iron-sulfur center (81 aa).

4Fe-4S ferredoxin-type domains lie at 2–31 and 39–68; these read SHAVKIYDTCIGCTQCVRACPLDVLEMVPW and IASSPRTEDCVGCKRCETACPTDFLSIRVY. [4Fe-4S] cluster contacts are provided by Cys11, Cys14, Cys17, Cys21, Cys48, Cys51, Cys54, and Cys58.

As to quaternary structure, the cyanobacterial PSI reaction center is composed of one copy each of PsaA,B,C,D,E,F,I,J,K,L,M and X, and forms trimeric complexes. [4Fe-4S] cluster is required as a cofactor.

It localises to the cellular thylakoid membrane. The catalysed reaction is reduced [plastocyanin] + hnu + oxidized [2Fe-2S]-[ferredoxin] = oxidized [plastocyanin] + reduced [2Fe-2S]-[ferredoxin]. Functionally, apoprotein for the two 4Fe-4S centers FA and FB of photosystem I (PSI); essential for photochemical activity. FB is the terminal electron acceptor of PSI, donating electrons to ferredoxin. The C-terminus interacts with PsaA/B/D and helps assemble the protein into the PSI complex. Required for binding of PsaD and PsaE to PSI. PSI is a plastocyanin/cytochrome c6-ferredoxin oxidoreductase, converting photonic excitation into a charge separation, which transfers an electron from the donor P700 chlorophyll pair to the spectroscopically characterized acceptors A0, A1, FX, FA and FB in turn. The chain is Photosystem I iron-sulfur center from Prochlorococcus marinus (strain MIT 9312).